Here is a 710-residue protein sequence, read N- to C-terminus: Polyribonucleotide nucleotidyltransferase (710 aa).

Mg(2+) is bound by residues D487 and D493. Residues 554 to 613 (PKIITMTINPDKIRDVIGPSGKQINKIIEETGVKIDIEQDGTVFISSIDQQMNEKAKKII) form the KH domain. In terms of domain architecture, S1 motif spans 623 to 691 (GEIYLGKVKR…KQGRVNLSRK (69 aa)).

It belongs to the polyribonucleotide nucleotidyltransferase family. Mg(2+) serves as cofactor.

Its subcellular location is the cytoplasm. It carries out the reaction RNA(n+1) + phosphate = RNA(n) + a ribonucleoside 5'-diphosphate. Functionally, involved in mRNA degradation. Catalyzes the phosphorolysis of single-stranded polyribonucleotides processively in the 3'- to 5'-direction. The chain is Polyribonucleotide nucleotidyltransferase from Bacillus cytotoxicus (strain DSM 22905 / CIP 110041 / 391-98 / NVH 391-98).